A 1675-amino-acid polypeptide reads, in one-letter code: Clathrin heavy chain 1 (1675 aa).

A2 is modified (N-acetylalanine). Positions 2–479 (AQILPIRFQE…VDPTLALSVY (478 aa)) are globular terminal domain. WD40-like repeat regions lie at residues 24-67 (NIGF…RPIS), 68-107 (ADSA…MTDD), 108-149 (VTFW…SSLA), 150-195 (GCQI…QPIE), 196-257 (GHAA…PEAQ), 258-301 (NDFP…ISGE), and 302-330 (TIFV…VCVE). The residue at position 67 (S67) is a Phosphoserine. Residue T105 is modified to Phosphothreonine. At Y184 the chain carries Phosphotyrosine. Residue T394 is modified to Phosphothreonine. Residues 449 to 465 (EKWLKEDKLECSEELGD) form a binding site for the uncoating ATPase, involved in lattice disassembly region. The tract at residues 480 to 523 (LRANVPNKVIQCFAETGQVQKIVLYAKKVGYTPDWIFLLRNVMR) is flexible linker. A distal segment region spans residues 524-634 (ISPDQGQQFA…RALEHFTDLY (111 aa)). Residues 524-1675 (ISPDQGQQFA…QPQPGFGYSM (1152 aa)) are heavy chain arm. 7 CHCR repeats span residues 537–683 (VQDE…QIWV), 686–828 (ASKY…SEDV), 833–972 (ILVV…PLID), 979–1124 (LSET…VKEA), 1128–1269 (YIKA…FRLA), 1274–1420 (LHIV…LLLN), and 1423–1566 (LMVL…RECF). Y634 carries the phosphotyrosine modification. Residues 639-1675 (AVVHTHLLNP…QPQPGFGYSM (1037 aa)) form a proximal segment region. Residue K737 is modified to N6-succinyllysine. An N6-acetyllysine modification is found at K856. Y899 carries the phosphotyrosine modification. The residue at position 1167 (S1167) is a Phosphoserine. Y1206 is subject to Phosphotyrosine. Residues 1213–1522 (AAKLLYNNVS…YLFKGNNRWK (310 aa)) form an involved in binding clathrin light chain region. S1229 bears the Phosphoserine mark. N6-acetyllysine; alternate is present on K1441. K1441 bears the N6-succinyllysine; alternate mark. Phosphotyrosine occurs at positions 1477 and 1487. The residue at position 1494 (S1494) is a Phosphoserine. N6-acetyllysine is present on K1501. Residues 1550 to 1675 (AEELLQWFLQ…QPQPGFGYSM (126 aa)) form a trimerization region.

The protein belongs to the clathrin heavy chain family. Clathrin triskelions, composed of 3 heavy chains and 3 light chains, are the basic subunits of the clathrin coat. In the presence of light chains, hub assembly is influenced by both the pH and the concentration of calcium. Interacts with HIP1. Interacts with DENND1A, DENND1B and DENND1C. Interacts with OCRL. Interacts with ERBB2. Interacts with FKBP6. Interacts with CKAP5 and TACC3 forming the TACC3/ch-TOG/clathrin complex located at spindle inter-microtubules bridges; the complex implicates clathrin triskelions; TACC3 and CLTC are proposed to form a composite microtubule interaction surface. Interacts with ATG16L1 (via N-terminus). Interacts with RFTN1; the interaction occurs in response to pathogens. Interacts with USP2 isoform 2. Interacts with TMEM106B (via N-terminus). Interacts with DNAJC6; this interaction produces a local change in heavy-chain contacts, creating a detectable global distortion of the clathrin coat and leads to the recruitment of HSPA8.

Its subcellular location is the cytoplasmic vesicle membrane. It localises to the membrane. The protein localises to the coated pit. The protein resides in the melanosome. It is found in the cytoplasm. Its subcellular location is the cytoskeleton. It localises to the spindle. In terms of biological role, clathrin is the major protein of the polyhedral coat of coated pits and vesicles. Two different adapter protein complexes link the clathrin lattice either to the plasma membrane or to the trans-Golgi network. Acts as a component of the TACC3/ch-TOG/clathrin complex proposed to contribute to stabilization of kinetochore fibers of the mitotic spindle by acting as inter-microtubule bridge. The TACC3/ch-TOG/clathrin complex is required for the maintenance of kinetochore fiber tension. Plays a role in early autophagosome formation. Interaction with DNAJC6 mediates the recruitment of HSPA8 to the clathrin lattice and creates local destabilization of the lattice promoting uncoating. The sequence is that of Clathrin heavy chain 1 from Rattus norvegicus (Rat).